A 260-amino-acid polypeptide reads, in one-letter code: Indole-3-glycerol phosphate synthase (260 aa).

Belongs to the TrpC family.

It carries out the reaction 1-(2-carboxyphenylamino)-1-deoxy-D-ribulose 5-phosphate + H(+) = (1S,2R)-1-C-(indol-3-yl)glycerol 3-phosphate + CO2 + H2O. Its pathway is amino-acid biosynthesis; L-tryptophan biosynthesis; L-tryptophan from chorismate: step 4/5. The protein is Indole-3-glycerol phosphate synthase of Ruminiclostridium cellulolyticum (strain ATCC 35319 / DSM 5812 / JCM 6584 / H10) (Clostridium cellulolyticum).